The chain runs to 300 residues: tRNA-cytidine(32) 2-sulfurtransferase (300 aa).

A PP-loop motif motif is present at residues S57–S62. Residues C132, C135, and C223 each contribute to the [4Fe-4S] cluster site.

Belongs to the TtcA family. In terms of assembly, homodimer. Mg(2+) serves as cofactor. It depends on [4Fe-4S] cluster as a cofactor.

It localises to the cytoplasm. The catalysed reaction is cytidine(32) in tRNA + S-sulfanyl-L-cysteinyl-[cysteine desulfurase] + AH2 + ATP = 2-thiocytidine(32) in tRNA + L-cysteinyl-[cysteine desulfurase] + A + AMP + diphosphate + H(+). It participates in tRNA modification. Functionally, catalyzes the ATP-dependent 2-thiolation of cytidine in position 32 of tRNA, to form 2-thiocytidine (s(2)C32). The sulfur atoms are provided by the cysteine/cysteine desulfurase (IscS) system. The protein is tRNA-cytidine(32) 2-sulfurtransferase of Xanthomonas campestris pv. campestris (strain B100).